The chain runs to 279 residues: Thioredoxin-like 1-2, chloroplastic (279 aa).

The N-terminal 34 residues, M1–R34, are a transit peptide targeting the chloroplast. The region spanning P61–P203 is the Thioredoxin domain. Catalysis depends on nucleophile residues C126 and C129. C126 and C129 are disulfide-bonded. The disordered stretch occupies residues G242–R279.

It belongs to the thioredoxin family.

It is found in the plastid. The protein localises to the chloroplast. Its function is as follows. Probable thiol-disulfide oxidoreductase that may participate in various redox reactions. In Oryza sativa subsp. japonica (Rice), this protein is Thioredoxin-like 1-2, chloroplastic.